The sequence spans 323 residues: Methenyltetrahydromethanopterin cyclohydrolase (323 aa).

Belongs to the MCH family.

It is found in the cytoplasm. The enzyme catalyses 5,10-methenyl-5,6,7,8-tetrahydromethanopterin + H2O = N(5)-formyl-5,6,7,8-tetrahydromethanopterin + H(+). It participates in one-carbon metabolism; methanogenesis from CO(2); 5,10-methenyl-5,6,7,8-tetrahydromethanopterin from CO(2): step 3/3. Catalyzes the reversible interconversion of 5-formyl-H(4)MPT to methenyl-H(4)MPT(+). This Methanobrevibacter smithii (strain ATCC 35061 / DSM 861 / OCM 144 / PS) protein is Methenyltetrahydromethanopterin cyclohydrolase.